We begin with the raw amino-acid sequence, 688 residues long: Glycine--tRNA ligase beta subunit (688 aa).

It belongs to the class-II aminoacyl-tRNA synthetase family. As to quaternary structure, tetramer of two alpha and two beta subunits.

The protein localises to the cytoplasm. The catalysed reaction is tRNA(Gly) + glycine + ATP = glycyl-tRNA(Gly) + AMP + diphosphate. In Aliivibrio fischeri (strain MJ11) (Vibrio fischeri), this protein is Glycine--tRNA ligase beta subunit.